The following is a 192-amino-acid chain: Transcription termination/antitermination protein NusG (192 aa).

One can recognise a KOW domain in the interval 140-168 (VGEIVIVTDGPFETFTGTVEEIDQEKNRL).

It belongs to the NusG family.

Functionally, participates in transcription elongation, termination and antitermination. This Rickettsia felis (strain ATCC VR-1525 / URRWXCal2) (Rickettsia azadi) protein is Transcription termination/antitermination protein NusG.